A 546-amino-acid polypeptide reads, in one-letter code: Chaperonin GroEL (546 aa).

Residues 30–33, lysine 51, 87–91, glycine 415, and aspartate 496 each bind ATP; these read TLGP and DGTTT. The interval 526-546 is disordered; it reads PEDKPAPAMPGGMGGMGGMDF. A compositionally biased stretch (gly residues) spans 536–546; it reads GGMGGMGGMDF.

It belongs to the chaperonin (HSP60) family. As to quaternary structure, forms a cylinder of 14 subunits composed of two heptameric rings stacked back-to-back. Interacts with the co-chaperonin GroES.

It localises to the cytoplasm. The catalysed reaction is ATP + H2O + a folded polypeptide = ADP + phosphate + an unfolded polypeptide.. Its function is as follows. Together with its co-chaperonin GroES, plays an essential role in assisting protein folding. The GroEL-GroES system forms a nano-cage that allows encapsulation of the non-native substrate proteins and provides a physical environment optimized to promote and accelerate protein folding. This chain is Chaperonin GroEL, found in Zymomonas mobilis subsp. mobilis (strain ATCC 31821 / ZM4 / CP4).